Reading from the N-terminus, the 245-residue chain is 5-oxoprolinase subunit A (245 aa).

Belongs to the LamB/PxpA family. In terms of assembly, forms a complex composed of PxpA, PxpB and PxpC.

The enzyme catalyses 5-oxo-L-proline + ATP + 2 H2O = L-glutamate + ADP + phosphate + H(+). In terms of biological role, catalyzes the cleavage of 5-oxoproline to form L-glutamate coupled to the hydrolysis of ATP to ADP and inorganic phosphate. The protein is 5-oxoprolinase subunit A of Erwinia tasmaniensis (strain DSM 17950 / CFBP 7177 / CIP 109463 / NCPPB 4357 / Et1/99).